A 129-amino-acid polypeptide reads, in one-letter code: Chromatin accessibility complex protein 1 (129 aa).

Alanine 2 is subject to N-acetylalanine. The residue at position 102 (lysine 102) is an N6-acetyllysine. Positions 104 to 120 form a coiled coil; that stretch reads LKMLKEKREEEEDNEDD. The segment at 109–129 is disordered; sequence EKREEEEDNEDDGSDLGEALA. A compositionally biased stretch (acidic residues) spans 112–123; that stretch reads EEEEDNEDDGSD. Serine 122 is subject to Phosphoserine.

In terms of assembly, heterodimer with POLE3; binds to DNA. Component of the CHRAC ISWI chromatin remodeling complex at least composed of SMARCA5/SNF2H, BAZ1A/ACF1, CHRAC1 and POLE3; the complex preferentially binds DNA through the CHRAC1-POLE3 heterodimer and possesses ATP-dependent nucleosome-remodeling activity. Within the complex, the heterodimer with POLE3 interacts with SMARCA5/SNF2H; the interaction is direct and enhances nucleosome sliding activity by the SMARCA5/SNF2H and BAZ1A/ACF1 interaction. Within the complex, the heterodimer with POLE3 interacts with BAZ1A/ACF1; the interactions are direct. As to expression, ubiquitously expressed.

The protein localises to the nucleus. Forms a complex with DNA polymerase epsilon subunit POLE3 and binds naked DNA, which is then incorporated into chromatin, aided by the nucleosome remodeling activity of ISWI/SNF2H and ACF1. Does not enhance nucleosome sliding activity of the ACF-5 ISWI chromatin remodeling complex. This is Chromatin accessibility complex protein 1 (Chrac1) from Mus musculus (Mouse).